The chain runs to 435 residues: Asparagine--tRNA ligase (435 aa).

This sequence belongs to the class-II aminoacyl-tRNA synthetase family. In terms of assembly, homodimer.

It is found in the cytoplasm. The catalysed reaction is tRNA(Asn) + L-asparagine + ATP = L-asparaginyl-tRNA(Asn) + AMP + diphosphate + H(+). This is Asparagine--tRNA ligase from Leptospira borgpetersenii serovar Hardjo-bovis (strain JB197).